Reading from the N-terminus, the 267-residue chain is GTP cyclohydrolase FolE2 2 (267 aa).

This sequence belongs to the GTP cyclohydrolase IV family.

The enzyme catalyses GTP + H2O = 7,8-dihydroneopterin 3'-triphosphate + formate + H(+). Its pathway is cofactor biosynthesis; 7,8-dihydroneopterin triphosphate biosynthesis; 7,8-dihydroneopterin triphosphate from GTP: step 1/1. Converts GTP to 7,8-dihydroneopterin triphosphate. The chain is GTP cyclohydrolase FolE2 2 from Cupriavidus metallidurans (strain ATCC 43123 / DSM 2839 / NBRC 102507 / CH34) (Ralstonia metallidurans).